Reading from the N-terminus, the 24-residue chain is Brevinin-1Ba (24 aa).

C18 and C24 are joined by a disulfide.

As to expression, expressed by the skin glands.

Its subcellular location is the secreted. Functionally, antibacterial activity against Gram-positive bacterium S.aureus. The protein is Brevinin-1Ba of Lithobates berlandieri (Rio Grande leopard frog).